Consider the following 417-residue polypeptide: UDP-N-acetylmuramoylalanine--D-glutamate ligase (417 aa).

104-110 (GSNGKST) provides a ligand contact to ATP.

This sequence belongs to the MurCDEF family.

It localises to the cytoplasm. The catalysed reaction is UDP-N-acetyl-alpha-D-muramoyl-L-alanine + D-glutamate + ATP = UDP-N-acetyl-alpha-D-muramoyl-L-alanyl-D-glutamate + ADP + phosphate + H(+). Its pathway is cell wall biogenesis; peptidoglycan biosynthesis. Its function is as follows. Cell wall formation. Catalyzes the addition of glutamate to the nucleotide precursor UDP-N-acetylmuramoyl-L-alanine (UMA). The polypeptide is UDP-N-acetylmuramoylalanine--D-glutamate ligase (Francisella tularensis subsp. novicida (strain U112)).